We begin with the raw amino-acid sequence, 644 residues long: Keratin, type II cytoskeletal 1 (644 aa).

Residues S2 to R179 form a head region. R12 bears the Omega-N-methylarginine mark. Phosphoserine is present on residues S18 and S21. The span at A22 to R38 shows a compositional bias: low complexity. Positions A22–S47 are disordered. R45 carries the omega-N-methylarginine modification. The residue at position 66 (S66) is a Phosphoserine. The residue at position 82 (R82) is an Omega-N-methylarginine. Residues E180–L215 form a coil 1A region. The region spanning E180–M493 is the IF rod domain. The segment at Q216–F234 is linker 1. Residues I235–M326 are coil 1B. The residue at position 276 (K276) is an N6,N6-dimethyllysine. Positions Q327–I350 are linker 12. Position 344 is a phosphoserine (S344). The coil 2 stretch occupies residues I351–E489. Disordered stretches follow at residues E489 to G523 and S568 to R644. The tract at residues E490–R644 is tail. Low complexity predominate over residues V501–T511. Gly residues-rich tracts occupy residues S513–G523 and S568–S620. Residues R518 and R588 each carry the omega-N-methylarginine modification. The segment covering G621 to S631 has biased composition (low complexity). The span at V632–R644 shows a compositional bias: polar residues.

It belongs to the intermediate filament family. As to quaternary structure, heterotetramer of two type I and two type II keratins. Heterodimer with KRT10. Two heterodimers of KRT1 and KRT10 form a heterotetramer. Forms a heterodimer with KRT14; the interaction is more abundant in the absence of KRT5. Interacts with PLEC isoform 1C, when in a heterodimer with KRT10. Interacts with ITGB1 in the presence of RACK1 and SRC, and with RACK1. Interacts with C1QBP; the association represents a cell surface kininogen receptor. Interacts with EPPK1; interaction is dependent of higher-order structure of intermediate filament. Post-translationally, undergoes deimination of some arginine residues (citrullination). In terms of tissue distribution, the source of this protein is neonatal foreskin. The 67-kDa type II keratins are expressed in terminally differentiating epidermis.

It localises to the cell membrane. Its subcellular location is the cytoplasm. In terms of biological role, may regulate the activity of kinases such as PKC and SRC via binding to integrin beta-1 (ITB1) and the receptor of activated protein C kinase 1 (RACK1). In complex with C1QBP is a high affinity receptor for kininogen-1/HMWK. The protein is Keratin, type II cytoskeletal 1 (KRT1) of Homo sapiens (Human).